The sequence spans 716 residues: Translation initiation factor IF-2 (716 aa).

Residues Phe50–Ile137 are disordered. Positions Asn92 to Asn101 are enriched in low complexity. Residues Lys102–Asn118 show a composition bias toward basic residues. Residues Lys125–Ile137 show a composition bias toward basic and acidic residues. The tr-type G domain maps to Ile217–Lys386. The G1 stretch occupies residues Gly226 to Thr233. Gly226–Thr233 lines the GTP pocket. Residues Gly251 to His255 form a G2 region. Residues Asp272–Gly275 are G3. GTP-binding positions include Asp272–His276 and Asn326–Asp329. The segment at Asn326–Asp329 is G4. The segment at Ser362–Leu364 is G5.

This sequence belongs to the TRAFAC class translation factor GTPase superfamily. Classic translation factor GTPase family. IF-2 subfamily.

It is found in the cytoplasm. Functionally, one of the essential components for the initiation of protein synthesis. Protects formylmethionyl-tRNA from spontaneous hydrolysis and promotes its binding to the 30S ribosomal subunits. Also involved in the hydrolysis of GTP during the formation of the 70S ribosomal complex. In Bacillus licheniformis (strain ATCC 14580 / DSM 13 / JCM 2505 / CCUG 7422 / NBRC 12200 / NCIMB 9375 / NCTC 10341 / NRRL NRS-1264 / Gibson 46), this protein is Translation initiation factor IF-2.